Here is a 339-residue protein sequence, read N- to C-terminus: Pleckstrin homology domain protein opy1 (339 aa).

Positions 25–119 (RVLKSGWLIK…WVHVLRSTTG (95 aa)) constitute a PH 1 domain. The span at 141–167 (ESEPNVQISDTDFDNISTEPRNQTTSP) shows a compositional bias: polar residues. Positions 141–170 (ESEPNVQISDTDFDNISTEPRNQTTSPLDL) are disordered. The region spanning 233–330 (KVLMQGTIHW…WVAALKTSID (98 aa)) is the PH 2 domain.

In terms of assembly, interacts (via domain PH 1) with phosphatidylinositol 4-phosphate 5-kinase its3; the interaction is direct but opy1 does not appear to regulate its3 localization or function.

Its subcellular location is the cell tip. The protein resides in the cell membrane. Its function is as follows. Binds phosphatidylinositol 4,5-bisphosphate (PtdIns(4,5)P2/PIP2) at the cell membrane. This is Pleckstrin homology domain protein opy1 from Schizosaccharomyces pombe (strain 972 / ATCC 24843) (Fission yeast).